Reading from the N-terminus, the 123-residue chain is Large ribosomal subunit protein bL20 (123 aa).

This sequence belongs to the bacterial ribosomal protein bL20 family.

Binds directly to 23S ribosomal RNA and is necessary for the in vitro assembly process of the 50S ribosomal subunit. It is not involved in the protein synthesizing functions of that subunit. This chain is Large ribosomal subunit protein bL20 (rplT), found in Chlamydia muridarum (strain MoPn / Nigg).